A 697-amino-acid chain; its full sequence is Transmembrane protein 168 (697 aa).

Helical transmembrane passes span 36 to 56 (LGYLARINLLVAICLGLYVRW), 63 to 83 (LILVIFILGLFVLGIASILYY), and 89 to 109 (AASLSLSNLWFGFLLGLLCFL). Asparagine 111 is a glycosylation site (N-linked (GlcNAc...) asparagine). Transmembrane regions (helical) follow at residues 172–192 (MLVEKSLSVILLVVALAMLII), 199–219 (FLAIPNLVIFAVLLFFSSLET), 223–243 (PIAFACFFICLITDPFLDIYF), 265–285 (LSVVFAGMIELTFFILSAFKL), 293–313 (FVIPGFSIFGIFWMICHIIFL), 352–372 (FCLISEQLVFFSLLATAILGA), and 380–400 (GIFLSMFLIVLPLESMAHGLF). Residues asparagine 533 and asparagine 598 are each glycosylated (N-linked (GlcNAc...) asparagine). Residues 646–666 (ITYPLVHLANWLCGLNLFWIC) traverse the membrane as a helical segment.

Belongs to the TMEM168 family.

It localises to the nucleus membrane. Plays a key role in maintaining the cardiac electrical stability by modulating cell surface expression of SCN5A. May play a role in the modulation of anxiety behavior by regulating GABAergic neuronal system in the nucleus accumbens. The polypeptide is Transmembrane protein 168 (Homo sapiens (Human)).